We begin with the raw amino-acid sequence, 223 residues long: Thymidylate kinase (223 aa).

Position 7–14 (7–14 (GIDGAGKS)) interacts with ATP.

This sequence belongs to the thymidylate kinase family.

It carries out the reaction dTMP + ATP = dTDP + ADP. In terms of biological role, phosphorylation of dTMP to form dTDP in both de novo and salvage pathways of dTTP synthesis. In Prosthecochloris aestuarii (strain DSM 271 / SK 413), this protein is Thymidylate kinase.